Here is a 223-residue protein sequence, read N- to C-terminus: uncharacterized protein (223 aa).

Residues 33–67 (CPICGGKGTLKAIQFIHRIPYFGEVMESTVVCERC) form a C4-type zinc finger.

This sequence belongs to the ZPR1 family.

This is an uncharacterized protein from Pyrococcus horikoshii (strain ATCC 700860 / DSM 12428 / JCM 9974 / NBRC 100139 / OT-3).